Reading from the N-terminus, the 980-residue chain is Protein translocase subunit SecA (980 aa).

ATP is bound by residues Gln-109, Gly-127–Thr-131, and Asp-529. Positions Gln-954–Gln-980 are disordered. Zn(2+)-binding residues include Cys-962, Cys-964, Cys-973, and His-974.

Belongs to the SecA family. In terms of assembly, monomer and homodimer. Part of the essential Sec protein translocation apparatus which comprises SecA, SecYEG and auxiliary proteins SecDF. Other proteins may also be involved. Requires Zn(2+) as cofactor.

It is found in the cell inner membrane. The protein localises to the cytoplasm. It carries out the reaction ATP + H2O + cellular proteinSide 1 = ADP + phosphate + cellular proteinSide 2.. Functionally, part of the Sec protein translocase complex. Interacts with the SecYEG preprotein conducting channel. Has a central role in coupling the hydrolysis of ATP to the transfer of proteins into and across the cell membrane, serving as an ATP-driven molecular motor driving the stepwise translocation of polypeptide chains across the membrane. This is Protein translocase subunit SecA from Brachyspira hyodysenteriae (strain ATCC 49526 / WA1).